Consider the following 64-residue polypeptide: Phylloxin-S1 (64 aa).

The N-terminal stretch at 1–22 (MVFLKKSLLLVLFVGLVSLSIC) is a signal peptide. Positions 23-44 (EENKREEHEEVEENAEKAEEKR) are excised as a propeptide. Gln-63 is modified (glutamine amide).

In terms of tissue distribution, expressed by the skin glands.

It localises to the secreted. In terms of biological role, antimicrobial peptide against both Gram-positive and Gram-negative bacteria. In Phyllomedusa sauvagei (Sauvage's leaf frog), this protein is Phylloxin-S1.